Here is a 194-residue protein sequence, read N- to C-terminus: Potassium-transporting ATPase KdpC subunit (194 aa).

The chain crosses the membrane as a helical span at residues Leu-12–Phe-34.

This sequence belongs to the KdpC family. The system is composed of three essential subunits: KdpA, KdpB and KdpC.

It is found in the cell inner membrane. Functionally, part of the high-affinity ATP-driven potassium transport (or Kdp) system, which catalyzes the hydrolysis of ATP coupled with the electrogenic transport of potassium into the cytoplasm. This subunit acts as a catalytic chaperone that increases the ATP-binding affinity of the ATP-hydrolyzing subunit KdpB by the formation of a transient KdpB/KdpC/ATP ternary complex. In Salmonella heidelberg (strain SL476), this protein is Potassium-transporting ATPase KdpC subunit.